The primary structure comprises 299 residues: Meso-diaminopimelate D-dehydrogenase (299 aa).

NADP(+) is bound by residues 11 to 14 (YGNI), Arg-36, 67 to 70 (CTPT), 90 to 92 (SFD), and 119 to 123 (AGWDP). Substrate contacts are provided by residues Asp-92, Asp-122, Phe-146, 152–153 (MG), Thr-171, Arg-181, His-227, and Asn-253.

Belongs to the diaminopimelate dehydrogenase family. In terms of assembly, homodimer.

It carries out the reaction meso-2,6-diaminopimelate + NADP(+) + H2O = (S)-2-amino-6-oxoheptanedioate + NH4(+) + NADPH + H(+). The protein operates within amino-acid biosynthesis; L-lysine biosynthesis via DAP pathway; DL-2,6-diaminopimelate from (S)-tetrahydrodipicolinate: step 1/1. Catalyzes the reversible NADPH-dependent reductive amination of L-2-amino-6-oxopimelate, the acyclic form of L-tetrahydrodipicolinate, to generate the meso compound, D,L-2,6-diaminopimelate. Probably plays a role in lysine biosynthesis. Exhibits a high substrate specificity for meso-2,6-diaminopimelate (m-DAP), since the activity with L,L-2,6-diaminopimelate is less than 5% of the activity observed with m-DAP. Can use NAD(+) only very poorly since the activity observed in the presence of NAD(+) is about 14% of that with NADP(+). The sequence is that of Meso-diaminopimelate D-dehydrogenase (ddh) from Bacteroides fragilis (strain ATCC 25285 / DSM 2151 / CCUG 4856 / JCM 11019 / LMG 10263 / NCTC 9343 / Onslow / VPI 2553 / EN-2).